The chain runs to 599 residues: Spermatogenesis-associated protein 7 (599 aa).

The tract at residues 163-205 (KSSKVITNGPEKNSSSSPSSVDYAASGPRKLSSGALYGRRPRS) is disordered. Residues 166–175 (KVITNGPEKN) show a composition bias toward polar residues.

Found in a complex with CFAP410, NEK1 and SPATA7. Interacts with NEK1. Interacts with RPGRIP1. Interacts with RPGR. Interacts with NPHP4. Interacts with NPHP1. Interacts with AHI1.

Its subcellular location is the cytoplasm. The protein localises to the cytoskeleton. It localises to the cilium axoneme. The protein resides in the cilium basal body. It is found in the cell projection. Its subcellular location is the cilium. The protein localises to the photoreceptor outer segment. Its function is as follows. Involved in the maintenance of both rod and cone photoreceptor cells. It is required for recruitment and proper localization of RPGRIP1 to the photoreceptor connecting cilium (CC), as well as photoreceptor-specific localization of proximal CC proteins at the distal CC. Maintenance of protein localization at the photoreceptor-specific distal CC is essential for normal microtubule stability and to prevent photoreceptor degeneration. This chain is Spermatogenesis-associated protein 7 (SPATA7), found in Homo sapiens (Human).